We begin with the raw amino-acid sequence, 150 residues long: Ribosome maturation factor RimP (150 aa).

The protein belongs to the RimP family.

The protein localises to the cytoplasm. Functionally, required for maturation of 30S ribosomal subunits. The polypeptide is Ribosome maturation factor RimP (Francisella philomiragia subsp. philomiragia (strain ATCC 25017 / CCUG 19701 / FSC 153 / O#319-036)).